Here is an 88-residue protein sequence, read N- to C-terminus: Large ribosomal subunit protein bL27 (88 aa).

The segment at 1 to 21 is disordered; the sequence is MAHKKGASSSRNGRDSAAQRL.

It belongs to the bacterial ribosomal protein bL27 family.

This Mycobacterium sp. (strain MCS) protein is Large ribosomal subunit protein bL27.